A 1110-amino-acid chain; its full sequence is MMAPSTEDPDTVVEAQRRGSFSKKKNANGWNKVELVDQCAKQMGSEDKQPGGGDVKTENDPSKNGLGSATSNFIQSSVPPSHQTLSNPLQLSPPAEASVAQQSGASQVFPTFQAALGASSDELLQPNATSSSTSSSASTSSIVPVVKFTNQTAPNGSTVATSVGQNVRLTINGKRVGRPPGTFKRPQNNAANSSNSGNDSDMMGDHDLTCRWKSCNSSFQTLKALVDHVQESHVQSTEQEHHAWRCEWEGCDRNETFKALYMLIVHVRRHTGEKPNKCEYPGCGKEYSRLENLKTHRRTHTGEKPYKCEFADCEKAFSNASDRAKHQNRTHSNLKPYSCQIPQCTKSYTDPSSLRKHIKAVHGDDEYEKAKKSRPANYSNRRRPDHRLAPPTGAMSHPYLATPNSGASVVAHSSVHQQNFINMALAQHHHNAQRAQQLMAATGNVMPMMDPASAAAAAQAQAHHQAQAQMLQTHMMQQAQIQAAAQMQAQVQHQAAMQAHAMQQAQMVLQNNLLGAQSLLSPFSPLLPPSRAPNVMAMLQTPPTPTSVAPMFDIMTSRAPMAPVVSAPTAPAPLVPAPVPASPVFDELREQMREVEPLQQQQQQEPMDQDLQDIRVDGDSDDEDEEEPRTPSGALLLPRGGNNGDGGFGGSGSSRASSGSGTMELSAAPISQNGSRASGSGERGMRSFLIADILQLAADFQNERLLSDVLDLAIFDTRDVRSLHNIYQVYIRAHKAIPITRRPLDWNETHQLHNLYHDPRFNRAEHQDSPAIRDRDTRFWRTIAEANTMRQRQIEPVPLDDDDEGYFDEMVHRVQNGRLNEQFMEGFESDDDDGFEDEDDVPGLGIAVYRGRRRVRREALKQANLDIQEAETAGRNVGGFGDEEDRNNRGHDQDRSFLDHYYPPMVVVVETESPQIVRDQEMMRQFEEAKKNVETDEIKKRAEAMQFGTSSSHHHTKTLLIQRALFDKTSSVRRSLLQFITISVDQEELRQSCHATSAPQGAHVVHNVVDEFDSIMRAQEDSNNRILLSLDIPAPSAVTGVSGSITHADNSALQLQQEQPTSSFSSWFPEDDPIYALPPPPPPPAPPRRRRSADNKDDSENIPKKPRHQF.

Disordered regions lie at residues M1–S103 and T170–M202. Over residues G44–P61 the composition is skewed to basic and acidic residues. The segment covering G65–Q90 has biased composition (polar residues). The segment covering N188–D201 has biased composition (low complexity). Residues L208–H233 form a C2H2-type 1; low DNA-binding affinity zinc finger. The C2H2-type 2; low DNA-binding affinity zinc finger occupies W244 to H270. C2H2-type zinc fingers lie at residues N276–H300, Y306–H331, and Y337–H362. 4 disordered regions span residues G363–H397, E594–E682, R875–R895, and Q1057–F1110. Over residues P597–P606 the composition is skewed to low complexity. Residues G641–G652 are compositionally biased toward gly residues. The segment covering P669–S678 has biased composition (polar residues). Basic and acidic residues predominate over residues R886–R895. Over residues Q1057–S1066 the composition is skewed to polar residues. Positions A1076–P1086 are enriched in pro residues. Positions S1092–P1103 are enriched in basic and acidic residues.

Belongs to the GLI C2H2-type zinc-finger protein family. As to quaternary structure, interacts with the MX regulatory domain of tra-2. In terms of tissue distribution, expressed in intestine and gonads (at protein level).

Its subcellular location is the cytoplasm. It is found in the nucleus. Its function is as follows. Plays a major role in controlling sexual phenotype. Terminal global regulator in a well-characterized cascade of sex-determining genes. Promotes female development. Interacts with tra-2 to promote spermatogenesis. Promotes spermatogenesis through the Tip60 HAT complex and by regulating the expression of genes, such as fog-3, required for male development. Association with chromatin and at the fog-3 promoter requires wdr-5.1, and may also require wdr-5.2. With trr-1, activates the fog-3 gene to determine sperm/oocyte cell fate. In hermaphrodites, binds to an intronic regulatory site in the ceh-30 gene, preventing ceh-30 transcription and thereby preventing survival of the CEM (cephalic male) sensory neurons. Represses the expression of the transcription factor dmd-3 in hermaphrodites to govern the timing and extent of male tail tip morphogenesis. Plays a role in controlling the sex-specific differentiation of PHC sensory neurons and represses the development of male-specific morphological features. In Caenorhabditis elegans, this protein is Sex-determining transformer protein 1.